The primary structure comprises 230 residues: UPF0758 protein plu4865 (230 aa).

Residues 108–230 enclose the MPN domain; it reads IMSSPSVTQE…CVSFAERGWI (123 aa). Zn(2+) contacts are provided by histidine 179, histidine 181, and aspartate 192. Residues 179-192 carry the JAMM motif motif; it reads HNHPSGHAEPSLAD.

The protein belongs to the UPF0758 family. YicR subfamily.

This chain is UPF0758 protein plu4865, found in Photorhabdus laumondii subsp. laumondii (strain DSM 15139 / CIP 105565 / TT01) (Photorhabdus luminescens subsp. laumondii).